Consider the following 552-residue polypeptide: Putative transport protein APL_0966 (552 aa).

The next 5 helical transmembrane spans lie at 4-24 (IAII…IGHI), 29-49 (VGLG…CTHL), 65-85 (FGLI…FFAS), 95-115 (GFAV…HKLF), and 161-181 (IAYP…RIIF). 2 RCK C-terminal domains span residues 190-275 (QEFD…ILGE) and 277-360 (ADVS…IIGD). Helical transmembrane passes span 370–390 (MLPI…PLYI), 402–424 (AGGP…LYWF), 438–458 (IVLF…DTLL), 463–483 (LAWM…TGFV), 492–512 (YLSL…LAFA), and 529–549 (VYPL…ILLW).

The protein belongs to the AAE transporter (TC 2.A.81) family. YidE subfamily.

It localises to the cell membrane. The protein is Putative transport protein APL_0966 of Actinobacillus pleuropneumoniae serotype 5b (strain L20).